Consider the following 199-residue polypeptide: MVKFTPSFNRLVGEFAKLPGIGRKTAVRLTLFMLRQTSQDALALGEAVRELKERTRFCSRCFYFTEEDPCPLCTDVGRDDQLICVVEEPQDVIAIERSRSFRGRYHVLHGSLSPLDGIGPDDLKIDALLERLQQNNVKEVLLATNFDVEGEATALYLAKVIQPFGVKVTRLAHGIPTGSDLEYVDEATVNHAVEGRREL.

The C4-type zinc finger occupies 58–73; it reads CSRCFYFTEEDPCPLC. In terms of domain architecture, Toprim spans 81–176; the sequence is QLICVVEEPQ…KVTRLAHGIP (96 aa).

This sequence belongs to the RecR family.

Its function is as follows. May play a role in DNA repair. It seems to be involved in an RecBC-independent recombinational process of DNA repair. It may act with RecF and RecO. This is Recombination protein RecR from Syntrophotalea carbinolica (strain DSM 2380 / NBRC 103641 / GraBd1) (Pelobacter carbinolicus).